Here is a 100-residue protein sequence, read N- to C-terminus: MIENALILGAYLFCIGFYGLITSRNMIRALMCLELIFNAVNINFVTFSNYFDTQERKGEIFSISVIAIAAAEAAIGLSIILIIYRNRKSTRIDQFNLLKW.

The next 3 membrane-spanning stretches (helical) occupy residues 1–21, 29–49, and 63–83; these read MIEN…YGLI, ALMC…TFSN, and ISVI…ILII.

It belongs to the complex I subunit 4L family. NDH is composed of at least 16 different subunits, 5 of which are encoded in the nucleus.

The protein localises to the plastid. It localises to the chloroplast thylakoid membrane. It carries out the reaction a plastoquinone + NADH + (n+1) H(+)(in) = a plastoquinol + NAD(+) + n H(+)(out). The catalysed reaction is a plastoquinone + NADPH + (n+1) H(+)(in) = a plastoquinol + NADP(+) + n H(+)(out). NDH shuttles electrons from NAD(P)H:plastoquinone, via FMN and iron-sulfur (Fe-S) centers, to quinones in the photosynthetic chain and possibly in a chloroplast respiratory chain. The immediate electron acceptor for the enzyme in this species is believed to be plastoquinone. Couples the redox reaction to proton translocation, and thus conserves the redox energy in a proton gradient. The protein is NAD(P)H-quinone oxidoreductase subunit 4L, chloroplastic of Angiopteris evecta (Mule's foot fern).